The sequence spans 395 residues: Elongation factor Tu (395 aa).

Residues 10-205 (KPHVNIGTIG…VDSYIPLPPR (196 aa)) enclose the tr-type G domain. The segment at 19–26 (GHVDHGKT) is G1. 19 to 26 (GHVDHGKT) lines the GTP pocket. T26 provides a ligand contact to Mg(2+). Residues 60–64 (GITIN) are G2. Positions 81-84 (DCPG) are G3. GTP is bound by residues 81–85 (DCPGH) and 136–139 (NKVD). Residues 136–139 (NKVD) are G4. The G5 stretch occupies residues 174 to 176 (SAT).

It belongs to the TRAFAC class translation factor GTPase superfamily. Classic translation factor GTPase family. EF-Tu/EF-1A subfamily. As to quaternary structure, monomer.

It is found in the cytoplasm. The enzyme catalyses GTP + H2O = GDP + phosphate + H(+). Functionally, GTP hydrolase that promotes the GTP-dependent binding of aminoacyl-tRNA to the A-site of ribosomes during protein biosynthesis. This is Elongation factor Tu from Terrimonas ferruginea (Flavobacterium ferrugineum).